The sequence spans 54 residues: Large ribosomal subunit protein bL33B (54 aa).

This sequence belongs to the bacterial ribosomal protein bL33 family.

The protein is Large ribosomal subunit protein bL33B of Myxococcus xanthus (strain DK1622).